The sequence spans 85 residues: Large ribosomal subunit protein eL34 (85 aa).

Belongs to the eukaryotic ribosomal protein eL34 family.

The polypeptide is Large ribosomal subunit protein eL34 (Saccharolobus islandicus (strain M.16.27) (Sulfolobus islandicus)).